Consider the following 232-residue polypeptide: 7-cyano-7-deazaguanine synthase (232 aa).

An ATP-binding site is contributed by 8 to 18 (FSGGQDSTTCL). Residues Cys189, Cys198, Cys201, and Cys204 each contribute to the Zn(2+) site.

It belongs to the QueC family. It depends on Zn(2+) as a cofactor.

The catalysed reaction is 7-carboxy-7-deazaguanine + NH4(+) + ATP = 7-cyano-7-deazaguanine + ADP + phosphate + H2O + H(+). The protein operates within purine metabolism; 7-cyano-7-deazaguanine biosynthesis. Catalyzes the ATP-dependent conversion of 7-carboxy-7-deazaguanine (CDG) to 7-cyano-7-deazaguanine (preQ(0)). In Yersinia enterocolitica serotype O:8 / biotype 1B (strain NCTC 13174 / 8081), this protein is 7-cyano-7-deazaguanine synthase.